A 240-amino-acid chain; its full sequence is MNESERKIVEEFQKETGINFKNEELLFRALCHSSYANEQNQAGRKDVESNEKLEFLGDAVLELFVCEILYKKYPEAEVGDLARVKSAAASEEVLAMVSRKMNLGKFLFLGKGEEKTGGRDRDSILADAFEALLAAIYLDQGYEKIKELFEQEFEFYIEKIMKGEMLFDYKTALQEIVQSEHKVPPEYILVRTEKNDGDRIFVVEVRVNGKTIATGKGRTKKEAEKEAARIAYEKLLKERS.

Positions 9–141 (VEEFQKETGI…LLAAIYLDQG (133 aa)) constitute an RNase III domain. Glu-54 contacts Mg(2+). The active site involves Asp-58. Mg(2+) is bound by residues Asp-127 and Glu-130. Glu-130 is a catalytic residue. The region spanning 168-237 (DYKTALQEIV…ARIAYEKLLK (70 aa)) is the DRBM domain.

The protein belongs to the ribonuclease III family. As to quaternary structure, homodimer. Mg(2+) is required as a cofactor.

It is found in the cytoplasm. The enzyme catalyses Endonucleolytic cleavage to 5'-phosphomonoester.. Digests double-stranded RNA. Involved in the processing of primary rRNA transcript to yield the immediate precursors to the large and small rRNAs (23S and 16S). Also processes some mRNAs, and tRNAs when they are encoded in the rRNA operon. Probably processes pre-crRNA and tracrRNA of type II CRISPR loci if present in the organism. The polypeptide is Ribonuclease 3 (rnc) (Thermotoga maritima (strain ATCC 43589 / DSM 3109 / JCM 10099 / NBRC 100826 / MSB8)).